A 325-amino-acid chain; its full sequence is Glutarate 2-hydroxylase (325 aa).

Fe cation-binding residues include H160, D162, and H292.

It belongs to the glutarate hydroxylase family. In terms of assembly, homotetramer. It depends on Fe(2+) as a cofactor.

The catalysed reaction is glutarate + 2-oxoglutarate + O2 = (S)-2-hydroxyglutarate + succinate + CO2. Its pathway is amino-acid degradation. Acts as an alpha-ketoglutarate-dependent dioxygenase catalyzing hydroxylation of glutarate (GA) to L-2-hydroxyglutarate (L2HG). Functions in a L-lysine degradation pathway that proceeds via cadaverine, glutarate and L-2-hydroxyglutarate. The polypeptide is Glutarate 2-hydroxylase (Escherichia coli O17:K52:H18 (strain UMN026 / ExPEC)).